An 891-amino-acid polypeptide reads, in one-letter code: DNA mismatch repair protein MutS (891 aa).

646–653 (GPNMAGKS) contacts ATP.

The protein belongs to the DNA mismatch repair MutS family.

Functionally, this protein is involved in the repair of mismatches in DNA. It is possible that it carries out the mismatch recognition step. This protein has a weak ATPase activity. The protein is DNA mismatch repair protein MutS of Rickettsia massiliae (strain Mtu5).